Consider the following 180-residue polypeptide: Large ribosomal subunit protein uL5 (180 aa).

It belongs to the universal ribosomal protein uL5 family. As to quaternary structure, part of the 50S ribosomal subunit; part of the 5S rRNA/L5/L18/L25 subcomplex. Contacts the 5S rRNA and the P site tRNA. Forms a bridge to the 30S subunit in the 70S ribosome.

Functionally, this is one of the proteins that bind and probably mediate the attachment of the 5S RNA into the large ribosomal subunit, where it forms part of the central protuberance. In the 70S ribosome it contacts protein S13 of the 30S subunit (bridge B1b), connecting the 2 subunits; this bridge is implicated in subunit movement. Contacts the P site tRNA; the 5S rRNA and some of its associated proteins might help stabilize positioning of ribosome-bound tRNAs. In Cupriavidus metallidurans (strain ATCC 43123 / DSM 2839 / NBRC 102507 / CH34) (Ralstonia metallidurans), this protein is Large ribosomal subunit protein uL5.